Reading from the N-terminus, the 303-residue chain is N-acetyl-D-glucosamine kinase (303 aa).

ATP is bound by residues G4–K11 and G133–L140. Residues H157, C177, C179, and C184 each contribute to the Zn(2+) site.

This sequence belongs to the ROK (NagC/XylR) family. NagK subfamily.

The enzyme catalyses N-acetyl-D-glucosamine + ATP = N-acetyl-D-glucosamine 6-phosphate + ADP + H(+). Its pathway is cell wall biogenesis; peptidoglycan recycling. In terms of biological role, catalyzes the phosphorylation of N-acetyl-D-glucosamine (GlcNAc) derived from cell-wall degradation, yielding GlcNAc-6-P. This is N-acetyl-D-glucosamine kinase from Salmonella agona (strain SL483).